The following is a 215-amino-acid chain: Putative serine/threonine-protein kinase YrzF (215 aa).

Positions 27 to 215 constitute a Protein kinase domain; the sequence is SEELTLIGKG…HFAQRKRKYS (189 aa). Residues 33–41 and Lys-54 contribute to the ATP site; that span reads IGKGRSAYV. The active-site Proton acceptor is Asp-135.

This sequence belongs to the protein kinase superfamily. Ser/Thr protein kinase family.

The enzyme catalyses L-seryl-[protein] + ATP = O-phospho-L-seryl-[protein] + ADP + H(+). The catalysed reaction is L-threonyl-[protein] + ATP = O-phospho-L-threonyl-[protein] + ADP + H(+). The chain is Putative serine/threonine-protein kinase YrzF (yrzF) from Bacillus subtilis (strain 168).